The chain runs to 369 residues: MTLCKWWRFMSDLDALQSNILADIANASDEAALEAVRVMALGKKGSISALLATLGKMSPDERKTEGAKINLAKDTVTRALAARREVLKALALDARLASETIDVTPPLRETPAEAGRIHPLSQVWDEVTTIFADMGFAVAEGPDIETDDYNFTRLNFPEGHPAREMHDTFYFNPKDDGSRLLLRTHTSPVQVRTMLSQKPPIRVICPGRTYRSDSDQTHTPMFHQVEGLVIDKSSHLGHLKWILHEFCKAFFEVDNVNMRFRPSFFPFTEPSLEVDIQCRRDKHEIRFGEGEDWLEILGCGMVHPNVLKLCGIDPEVYQGFAWGMGIDRITMLKYGIADLRQLFEGDVRWLTHYGFRPLEIPTLAGGLSS.

Position 269 (Glu269) interacts with Mg(2+).

It belongs to the class-II aminoacyl-tRNA synthetase family. Phe-tRNA synthetase alpha subunit type 1 subfamily. Tetramer of two alpha and two beta subunits. Mg(2+) is required as a cofactor.

It is found in the cytoplasm. The enzyme catalyses tRNA(Phe) + L-phenylalanine + ATP = L-phenylalanyl-tRNA(Phe) + AMP + diphosphate + H(+). This is Phenylalanine--tRNA ligase alpha subunit from Nitrobacter winogradskyi (strain ATCC 25391 / DSM 10237 / CIP 104748 / NCIMB 11846 / Nb-255).